A 1418-amino-acid polypeptide reads, in one-letter code: Protein ced-11 (1418 aa).

7 consecutive transmembrane segments (helical) span residues 617-637, 755-775, 782-802, 818-838, 856-876, 898-918, and 986-1006; these read FPIFLPKWAKICISAVLIIPV, YWLSLLFRIVFICCLAYSVVL, LWDTGMWVWSFFWWIENCFVL, VFDVFAFFVFLILLLVMKVFP, VVSAFFVLYVSYSTLFTYIPL, FLFMIALVMLSSAVAIQAVVF, and IVIEYFVILKLLLWPILFAFF.

Its subcellular location is the membrane. In terms of biological role, plays a major role in programmed cell death. The sequence is that of Protein ced-11 (ced-11) from Caenorhabditis elegans.